Consider the following 556-residue polypeptide: Energy-dependent translational throttle protein EttA (556 aa).

ABC transporter domains are found at residues 7–260 and 325–551; these read YTMH…EQEQ and IEVQ…RIKY. Residue 40–47 participates in ATP binding; it reads GLNGAGKS. Positions 96 to 140 are arm; it reads SEVKNALTRLDEVYALYADPDADFDKLAAEQANLEAIIQAHDGHN. The ptIM stretch occupies residues 243–323; it reads GNYSSWLEQK…IPPGPRLGDK (81 aa). 357-364 is a binding site for ATP; the sequence is GANGAGKS.

Belongs to the ABC transporter superfamily. ABCF family. Translational throttle EttA subfamily. In terms of assembly, monomer. Probably contacts ribosomal proteins L1, L5, L33 and S7, the 16S and 23S rRNA and the P-site containing tRNA(fMet).

The protein localises to the cytoplasm. It carries out the reaction ATP + H2O = ADP + phosphate + H(+). A translation factor that gates the progression of the 70S ribosomal initiation complex (IC, containing tRNA(fMet) in the P-site) into the translation elongation cycle by using a mechanism sensitive to the ATP/ADP ratio. Binds to the 70S ribosome E-site where it modulates the state of the translating ribosome during subunit translocation. ATP hydrolysis probably frees it from the ribosome, which can enter the elongation phase. The polypeptide is Energy-dependent translational throttle protein EttA (Haemophilus influenzae (strain ATCC 51907 / DSM 11121 / KW20 / Rd)).